Here is a 366-residue protein sequence, read N- to C-terminus: tRNA/tmRNA (uracil-C(5))-methyltransferase (366 aa).

5 residues coordinate S-adenosyl-L-methionine: Gln190, Tyr218, Asn223, Glu239, and Asp299. Cys324 acts as the Nucleophile in catalysis. The active-site Proton acceptor is the Glu358.

Belongs to the class I-like SAM-binding methyltransferase superfamily. RNA M5U methyltransferase family. TrmA subfamily.

It carries out the reaction uridine(54) in tRNA + S-adenosyl-L-methionine = 5-methyluridine(54) in tRNA + S-adenosyl-L-homocysteine + H(+). The catalysed reaction is uridine(341) in tmRNA + S-adenosyl-L-methionine = 5-methyluridine(341) in tmRNA + S-adenosyl-L-homocysteine + H(+). Functionally, dual-specificity methyltransferase that catalyzes the formation of 5-methyluridine at position 54 (m5U54) in all tRNAs, and that of position 341 (m5U341) in tmRNA (transfer-mRNA). This is tRNA/tmRNA (uracil-C(5))-methyltransferase from Escherichia coli (strain UTI89 / UPEC).